A 562-amino-acid chain; its full sequence is Formate--tetrahydrofolate ligase (562 aa).

71–78 (TPAGEGKS) contacts ATP.

The protein belongs to the formate--tetrahydrofolate ligase family.

It catalyses the reaction (6S)-5,6,7,8-tetrahydrofolate + formate + ATP = (6R)-10-formyltetrahydrofolate + ADP + phosphate. It functions in the pathway one-carbon metabolism; tetrahydrofolate interconversion. The polypeptide is Formate--tetrahydrofolate ligase (Bacillus anthracis (strain A0248)).